A 956-amino-acid chain; its full sequence is Glutamate receptor ionotropic, kainate 4 (956 aa).

An N-terminal signal peptide occupies residues 1-20; it reads MPRVSAPLVLLPAWLLMVAC. Over 21–545 the chain is Extracellular; it reads SPHSLRIAAI…YFSSLDPFSP (525 aa). 8 N-linked (GlcNAc...) asparagine glycosylation sites follow: asparagine 158, asparagine 220, asparagine 272, asparagine 286, asparagine 323, asparagine 408, asparagine 415, and asparagine 479. L-glutamate contacts are provided by glycine 500, threonine 502, and arginine 507. A helical membrane pass occupies residues 546–566; the sequence is GVWLFMLLAYLAVSCVLFLVA. The Cytoplasmic segment spans residues 567–623; it reads RLTPYEWYSPHPCAQGRCNLLVNQYSLGNSLWFPVGGFMQQGSTIAPRALSTRCVSG. A helical transmembrane segment spans residues 624 to 644; it reads VWWAFTLIIISSYTANLAAFL. Over 645–804 the chain is Extracellular; sequence TVQRMEVPIE…HRAKGLGMEN (160 aa). Positions 674, 675, and 723 each coordinate L-glutamate. N-linked (GlcNAc...) asparagine glycosylation occurs at asparagine 736. Residues 805-825 traverse the membrane as a helical segment; the sequence is IGGIFVVLICGLIVAIFMAML. Over 826 to 956 the chain is Cytoplasmic; sequence EFLWTLRHSE…DKTTNSSEPE (131 aa). Positions 931-956 are disordered; it reads LRARPSPARSEESLEWDKTTNSSEPE. Positions 939 to 948 are enriched in basic and acidic residues; it reads RSEESLEWDK.

It belongs to the glutamate-gated ion channel (TC 1.A.10.1) family. GRIK4 subfamily. In terms of assembly, homodimer. Can form functional heteromeric receptors with GRIK1, GRIK2 and GRIK3. In terms of tissue distribution, strong expression in hippocampal CA3 pyramidal cells. Low expression in hippocampal dentate granule cells, in layers II, V and VI of the cortex, and in cerebellar Purkinje cells. No expression in the striatum, reticular thalamus, hypothalamus or amygdaloid complex.

Its subcellular location is the cell membrane. The protein resides in the postsynaptic cell membrane. The protein localises to the presynaptic cell membrane. In terms of biological role, ionotropic glutamate receptor that functions as a cation-permeable ligand-gated ion channel, gated by L-glutamate and the glutamatergic agonist kainic acid. Cannot form functional channels on its own and shows channel activity only in heteromeric assembly with GRIK1, GRIK2 and GRIK3 subunits. In Rattus norvegicus (Rat), this protein is Glutamate receptor ionotropic, kainate 4 (Grik4).